The sequence spans 868 residues: DNA topoisomerase 1 (868 aa).

The Toprim domain occupies 3 to 147 (KSLVIVESPA…RYKRVVFNEI (145 aa)). Position 9 (E9) interacts with Mg(2+). The tract at residues 34 to 70 (IRDLPTSGSSSSKEPAAKGRKSASEAPALSPKEKARR) is disordered. D116 contacts Mg(2+). The Topo IA-type catalytic domain occupies 163 to 580 (DINRVNAQQA…EFYGDFKKKL (418 aa)). Positions 197–202 (SAGRVQ) are interaction with DNA. The O-(5'-phospho-DNA)-tyrosine intermediate role is filled by Y324. C4-type zinc fingers lie at residues 602–633 (CREC…KERC), 664–691 (CPIC…NPDC), and 713–738 (CDKC…NPTC).

Belongs to the type IA topoisomerase family. Monomer. The cofactor is Mg(2+).

It carries out the reaction ATP-independent breakage of single-stranded DNA, followed by passage and rejoining.. Its function is as follows. Releases the supercoiling and torsional tension of DNA, which is introduced during the DNA replication and transcription, by transiently cleaving and rejoining one strand of the DNA duplex. Introduces a single-strand break via transesterification at a target site in duplex DNA. The scissile phosphodiester is attacked by the catalytic tyrosine of the enzyme, resulting in the formation of a DNA-(5'-phosphotyrosyl)-enzyme intermediate and the expulsion of a 3'-OH DNA strand. The free DNA strand then undergoes passage around the unbroken strand, thus removing DNA supercoils. Finally, in the religation step, the DNA 3'-OH attacks the covalent intermediate to expel the active-site tyrosine and restore the DNA phosphodiester backbone. The sequence is that of DNA topoisomerase 1 from Pseudomonas aeruginosa (strain ATCC 15692 / DSM 22644 / CIP 104116 / JCM 14847 / LMG 12228 / 1C / PRS 101 / PAO1).